A 542-amino-acid chain; its full sequence is Hydroxylamine reductase (542 aa).

Residues C5, C8, C17, and C23 each contribute to the [4Fe-4S] cluster site. Residues H237, E261, C305, C397, C425, C450, E485, and K487 each contribute to the hybrid [4Fe-2O-2S] cluster site. Position 397 is a cysteine persulfide (C397).

The protein belongs to the HCP family. [4Fe-4S] cluster is required as a cofactor. The cofactor is hybrid [4Fe-2O-2S] cluster.

Its subcellular location is the cytoplasm. It carries out the reaction A + NH4(+) + H2O = hydroxylamine + AH2 + H(+). In terms of biological role, catalyzes the reduction of hydroxylamine to form NH(3) and H(2)O. The sequence is that of Hydroxylamine reductase from Acetivibrio thermocellus (strain ATCC 27405 / DSM 1237 / JCM 9322 / NBRC 103400 / NCIMB 10682 / NRRL B-4536 / VPI 7372) (Clostridium thermocellum).